A 319-amino-acid polypeptide reads, in one-letter code: 4-diphosphocytidyl-2-C-methyl-D-erythritol kinase (319 aa).

K21 is an active-site residue. P106–S116 lines the ATP pocket. D148 is an active-site residue.

The protein belongs to the GHMP kinase family. IspE subfamily.

It catalyses the reaction 4-CDP-2-C-methyl-D-erythritol + ATP = 4-CDP-2-C-methyl-D-erythritol 2-phosphate + ADP + H(+). The protein operates within isoprenoid biosynthesis; isopentenyl diphosphate biosynthesis via DXP pathway; isopentenyl diphosphate from 1-deoxy-D-xylulose 5-phosphate: step 3/6. Functionally, catalyzes the phosphorylation of the position 2 hydroxy group of 4-diphosphocytidyl-2C-methyl-D-erythritol. The chain is 4-diphosphocytidyl-2-C-methyl-D-erythritol kinase from Prochlorococcus marinus (strain MIT 9313).